We begin with the raw amino-acid sequence, 295 residues long: MLMQIKMDNHPFNFQPILASHSMTRDSTKPKKMTDTAFVPSPPVGFIKEENKADLHTISVVASNVTLPQIQLPKIATLEEPGYESRTGSLTDLSGRRNSVNIGALCEDVPNTAGPHIARPVTINNLIPPSLPRLNTYQLRPQLSDTHLNCHFNSNPYTTASHAPFESSYTTASTFTSQPAASYFPSNSTPATRKNSATTNLPSEERRRVSVSLSEQVFNEGERYNNDGQLIGKTGKPLRNTKRAAQNRSAQKAFRQRREKYIKNLEEKSKLFDGLMKENSELKKMIESLKSKLKE.

A phosphoserine mark is found at Ser-85, Ser-89, and Ser-196. The segment covering 181-202 (ASYFPSNSTPATRKNSATTNLP) has biased composition (polar residues). The segment at 181–205 (ASYFPSNSTPATRKNSATTNLPSEE) is disordered. Residues 237–295 (PLRNTKRAAQNRSAQKAFRQRREKYIKNLEEKSKLFDGLMKENSELKKMIESLKSKLKE) form the bZIP domain. The tract at residues 239-260 (RNTKRAAQNRSAQKAFRQRREK) is basic motif. Residues 262–271 (IKNLEEKSKL) are leucine-zipper.

The protein belongs to the bZIP family. YAP subfamily. In terms of assembly, homodimer.

Its subcellular location is the cytoplasm. The protein resides in the nucleus. In terms of biological role, transcription activator involved in the regulation of genes expressed in response to environmental changes and metabolic requirements. According to genome-wide promoter binding and gene expression studies it regulates, among others, genes involved in ribosome biogenesis, and protein synthesis. It may also be involved in pleiotropic drug resistance. When overexpressed it confers increased resistance to cisplatin, the DNA-alkylating agents methylmethanosulfonate, and mitomycin C, the antimalarial drugs quinidine, mefloquine, and chloroquine, and increases cellular tolerance to sodium and lithium. Preferentially binds 5'-TTACTAA-3'. This is AP-1-like transcription factor YAP4 (CIN5) from Saccharomyces cerevisiae (strain ATCC 204508 / S288c) (Baker's yeast).